Consider the following 96-residue polypeptide: MTKFKPLGDRILVKRVEAEERTSGGIVIPDTAKEKPIEGTVIAVGPGARDPQGNLIALEVKQGDRVLFGKWSGTEVKLSGEDYIVMKESDVFGTIA.

Belongs to the GroES chaperonin family. In terms of assembly, heptamer of 7 subunits arranged in a ring. Interacts with the chaperonin GroEL.

It is found in the cytoplasm. In terms of biological role, together with the chaperonin GroEL, plays an essential role in assisting protein folding. The GroEL-GroES system forms a nano-cage that allows encapsulation of the non-native substrate proteins and provides a physical environment optimized to promote and accelerate protein folding. GroES binds to the apical surface of the GroEL ring, thereby capping the opening of the GroEL channel. The protein is Co-chaperonin GroES of Holospora obtusa.